The sequence spans 667 residues: Chaperone protein DnaK (667 aa).

Thr196 carries the phosphothreonine; by autocatalysis modification. Disordered stretches follow at residues 495–525 (EANSGLSDEEIEKMKEEAEQHAEEDERRKER) and 595–667 (AGEE…GDDE). Positions 506-525 (EKMKEEAEQHAEEDERRKER) are enriched in basic and acidic residues. The segment covering 595 to 612 (AGEEIREAQQQQAQQGAA) has biased composition (low complexity). The span at 630–641 (GPAGGPTGGPAS) shows a compositional bias: gly residues. Over residues 647 to 667 (DSDEEDVQDADYEVVDEGDDE) the composition is skewed to acidic residues.

It belongs to the heat shock protein 70 family.

In terms of biological role, acts as a chaperone. This is Chaperone protein DnaK from Salinibacter ruber (strain DSM 13855 / M31).